A 100-amino-acid chain; its full sequence is uncharacterized protein (100 aa).

This is an uncharacterized protein from Haemophilus influenzae (strain ATCC 51907 / DSM 11121 / KW20 / Rd).